Reading from the N-terminus, the 474-residue chain is MKLSMPRFDQAPVLVVGDVMLDRYWHGATSRISPEAPVPVVRVEQHEDRPGGAANVALNIAALGAQALLVGVTGRDEAADSLANSLKAAGVDARFQRIDSQPTIVKLRVMSRHQQLLRVDFEEPFRTDAAALAVDVESLLAKVKVLVLSDYGKGALQNHQVLIQAARARNIPVLADPKGKDFAIYRGASLITPNLSEFETIVGRCADEAELVAKGQELMSELDLGALLVTRGEHGMTLLRHGQPALHLPARAREVFDVTGAGDTVISTLAAALAAGEELPSAVGLANLAAGIVVGKLGTAAISAPELRRAVQREQGSERGVLGLEQLLLAIEDARAHGEKIVFTNGCFDILHAGHVTYLEQARAQGDRLIVGVNDDASVTRLKGVGRPINSVDRRMAVLAGLGAVDWVVSFAEDTPERLLEQVRPDVLVKGGDYGVEQVVGAQIVKAYGGEVRVLGLVENSSTTAIVEKIRQKG.

Positions 1–318 are ribokinase; the sequence is MKLSMPRFDQ…RAVQREQGSE (318 aa). 194–197 is a binding site for ATP; sequence NLSE. D263 is a catalytic residue. The interval 343–474 is cytidylyltransferase; sequence FTNGCFDILH…AIVEKIRQKG (132 aa).

This sequence in the N-terminal section; belongs to the carbohydrate kinase PfkB family. In the C-terminal section; belongs to the cytidylyltransferase family. In terms of assembly, homodimer.

It carries out the reaction D-glycero-beta-D-manno-heptose 7-phosphate + ATP = D-glycero-beta-D-manno-heptose 1,7-bisphosphate + ADP + H(+). The catalysed reaction is D-glycero-beta-D-manno-heptose 1-phosphate + ATP + H(+) = ADP-D-glycero-beta-D-manno-heptose + diphosphate. Its pathway is nucleotide-sugar biosynthesis; ADP-L-glycero-beta-D-manno-heptose biosynthesis; ADP-L-glycero-beta-D-manno-heptose from D-glycero-beta-D-manno-heptose 7-phosphate: step 1/4. The protein operates within nucleotide-sugar biosynthesis; ADP-L-glycero-beta-D-manno-heptose biosynthesis; ADP-L-glycero-beta-D-manno-heptose from D-glycero-beta-D-manno-heptose 7-phosphate: step 3/4. In terms of biological role, catalyzes the phosphorylation of D-glycero-D-manno-heptose 7-phosphate at the C-1 position to selectively form D-glycero-beta-D-manno-heptose-1,7-bisphosphate. Its function is as follows. Catalyzes the ADP transfer from ATP to D-glycero-beta-D-manno-heptose 1-phosphate, yielding ADP-D-glycero-beta-D-manno-heptose. The protein is Bifunctional protein HldE of Pseudomonas aeruginosa (strain UCBPP-PA14).